The primary structure comprises 414 residues: MKKLIAFQILIALAVGAVIGHFFPDFGMALRPVGDGFIRLIKMIVVPIVFSTIVIGAAGSGSMKKMGSLGIKTIIWFEVITTLVLGLGLLLANVLKPGVGLDLSHLAKKDIHELSGYTDKVVDFKQMILDIIPTNIIDVMARNDLLAVIFFAILFGVAAAGIGKASEPVMKFFESTAQIMFKLTQIVMVTAPIGVLALMAASVGQYGIELLLPMFKLVGTVFLGLFLILFVLFPLVGLIFQIKYFEVLKMIWDLFLIAFSTTSTETILPQLMDRMEKYGCPKRVVSFVVPSGLSLNCDGSSLYLSVSCIFLAQAFQVDMTLSQQLLMMLVLVMTSKGIAAVPSGSLVVLLATANAVGLPAEGVAIIAGVDRVMDMARTGVNVPGHAIACIVVSKWEKAFRQKEWVSANSQTESI.

Residues 1–3 (MKK) lie on the Cytoplasmic side of the membrane. Residues 4–24 (LIAFQILIALAVGAVIGHFFP) traverse the membrane as a helical segment. Residues 25–42 (DFGMALRPVGDGFIRLIK) are Extracellular-facing. Residues 43–63 (MIVVPIVFSTIVIGAAGSGSM) traverse the membrane as a helical segment. The Cytoplasmic portion of the chain corresponds to 64-73 (KKMGSLGIKT). A helical membrane pass occupies residues 74 to 94 (IIWFEVITTLVLGLGLLLANV). Topologically, residues 95-144 (LKPGVGLDLSHLAKKDIHELSGYTDKVVDFKQMILDIIPTNIIDVMARND) are extracellular. A helical transmembrane segment spans residues 145–165 (LLAVIFFAILFGVAAAGIGKA). Over 166-182 (SEPVMKFFESTAQIMFK) the chain is Cytoplasmic. The helical transmembrane segment at 183–203 (LTQIVMVTAPIGVLALMAASV) threads the bilayer. Residues 204–219 (GQYGIELLLPMFKLVG) lie on the Extracellular side of the membrane. Residues 220 to 240 (TVFLGLFLILFVLFPLVGLIF) traverse the membrane as a helical segment. Gln-241 is a topological domain (cytoplasmic). A helical membrane pass occupies residues 242–262 (IKYFEVLKMIWDLFLIAFSTT). Topologically, residues 263–300 (STETILPQLMDRMEKYGCPKRVVSFVVPSGLSLNCDGS) are extracellular. The chain crosses the membrane as a helical span at residues 301–321 (SLYLSVSCIFLAQAFQVDMTL). Residues 322-324 (SQQ) are Cytoplasmic-facing. 2 helical membrane-spanning segments follow: residues 325–345 (LLMMLVLVMTSKGIAAVPSGS) and 346–366 (LVVLLATANAVGLPAEGVAII). The Cytoplasmic portion of the chain corresponds to 367–414 (AGVDRVMDMARTGVNVPGHAIACIVVSKWEKAFRQKEWVSANSQTESI).

This sequence belongs to the dicarboxylate/amino acid:cation symporter (DAACS) (TC 2.A.23) family.

Its subcellular location is the cell membrane. With respect to regulation, glutamate uptake is inhibited by beta-hydroxyaspartate and cysteic acid. Catalyzes the proton-dependent, binding-protein-independent transport of glutamate and aspartate. This is Proton/glutamate-aspartate symporter from Bacillus subtilis (strain 168).